The sequence spans 231 residues: Orotidine 5'-phosphate decarboxylase (231 aa).

Residues D11, K32, 59–68 (DLKFHDIPNT), T118, R180, Q189, G209, and R210 each bind substrate. K61 functions as the Proton donor in the catalytic mechanism.

This sequence belongs to the OMP decarboxylase family. Type 1 subfamily. Homodimer.

The enzyme catalyses orotidine 5'-phosphate + H(+) = UMP + CO2. It participates in pyrimidine metabolism; UMP biosynthesis via de novo pathway; UMP from orotate: step 2/2. In terms of biological role, catalyzes the decarboxylation of orotidine 5'-monophosphate (OMP) to uridine 5'-monophosphate (UMP). This chain is Orotidine 5'-phosphate decarboxylase, found in Synechocystis sp. (strain ATCC 27184 / PCC 6803 / Kazusa).